A 391-amino-acid polypeptide reads, in one-letter code: Galactokinase (391 aa).

Substrate is bound at residue 34-37 (EHTD). Position 121 to 127 (121 to 127 (GAGLSSS)) interacts with ATP. Mg(2+) is bound by residues Ser127 and Glu159. The active-site Proton acceptor is Asp171. A substrate-binding site is contributed by Tyr220.

Belongs to the GHMP kinase family. GalK subfamily.

It localises to the cytoplasm. It carries out the reaction alpha-D-galactose + ATP = alpha-D-galactose 1-phosphate + ADP + H(+). It functions in the pathway carbohydrate metabolism; galactose metabolism. Catalyzes the transfer of the gamma-phosphate of ATP to D-galactose to form alpha-D-galactose-1-phosphate (Gal-1-P). The protein is Galactokinase of Roseiflexus sp. (strain RS-1).